The primary structure comprises 1150 residues: PAN2-PAN3 deadenylation complex catalytic subunit pan2 (1150 aa).

2 WD repeats span residues A96–H139 and A270–E309. The interval M310–D446 is linker. One can recognise a USP domain in the interval D447–Q816. Residues V865–L1043 form the Exonuclease domain. A divalent metal cation contacts are provided by D868, E870, D977, and D1036. The segment at P1074–K1150 is disordered. The segment covering V1091–D1106 has biased composition (polar residues). A compositionally biased stretch (low complexity) spans A1108–Q1120.

This sequence belongs to the peptidase C19 family. PAN2 subfamily. In terms of assembly, forms a heterotrimer with an asymmetric homodimer of the regulatory subunit pan3 to form the poly(A)-nuclease (PAN) deadenylation complex. Requires a divalent metal cation as cofactor.

Its subcellular location is the cytoplasm. It catalyses the reaction Exonucleolytic cleavage of poly(A) to 5'-AMP.. Its activity is regulated as follows. Positively regulated by the regulatory subunit pan3. Functionally, catalytic subunit of the poly(A)-nuclease (PAN) deadenylation complex, one of two cytoplasmic mRNA deadenylases involved in mRNA turnover. PAN specifically shortens poly(A) tails of RNA and the activity is stimulated by poly(A)-binding protein pab1. PAN deadenylation is followed by rapid degradation of the shortened mRNA tails by the CCR4-NOT complex. Deadenylated mRNAs are then degraded by two alternative mechanisms, namely exosome-mediated 3'-5' exonucleolytic degradation, or deadenylation-dependent mRNA decaping and subsequent 5'-3' exonucleolytic degradation by xrn1. May also be involved in post-transcriptional maturation of mRNA poly(A) tails. This chain is PAN2-PAN3 deadenylation complex catalytic subunit pan2, found in Aspergillus niger (strain ATCC MYA-4892 / CBS 513.88 / FGSC A1513).